Reading from the N-terminus, the 518-residue chain is Probable cytochrome P450 9h1 (518 aa).

Cys-462 serves as a coordination point for heme.

The protein belongs to the cytochrome P450 family. Heme is required as a cofactor.

It is found in the endoplasmic reticulum membrane. The protein localises to the microsome membrane. Its function is as follows. May be involved in the metabolism of insect hormones and in the breakdown of synthetic insecticides. In Drosophila melanogaster (Fruit fly), this protein is Probable cytochrome P450 9h1 (Cyp9h1).